Consider the following 316-residue polypeptide: B3 domain-containing protein Os04g0581400 (316 aa).

Positions Met1–Asp100 are disordered. Positions Glu13–Glu36 are enriched in acidic residues. Residues Thr46 to Ser77 show a composition bias toward low complexity. Residues Gly88–Gly98 show a composition bias toward gly residues. The TF-B3 DNA-binding region spans Phe110–Ala215. The disordered stretch occupies residues Gly239–Ser290. Low complexity predominate over residues Arg253–Thr270.

The protein localises to the nucleus. The chain is B3 domain-containing protein Os04g0581400 from Oryza sativa subsp. japonica (Rice).